A 241-amino-acid chain; its full sequence is Putative ABC transporter ATP-binding protein CA_C0773 (241 aa).

One can recognise an ABC transporter domain in the interval isoleucine 2 to isoleucine 241. Glycine 34–serine 41 provides a ligand contact to ATP.

The protein belongs to the ABC transporter superfamily.

Its subcellular location is the cell membrane. Functionally, probably part of an ABC transporter complex. Responsible for energy coupling to the transport system. This is Putative ABC transporter ATP-binding protein CA_C0773 from Clostridium acetobutylicum (strain ATCC 824 / DSM 792 / JCM 1419 / IAM 19013 / LMG 5710 / NBRC 13948 / NRRL B-527 / VKM B-1787 / 2291 / W).